We begin with the raw amino-acid sequence, 210 residues long: N-(5'-phosphoribosyl)anthranilate isomerase (210 aa).

The protein belongs to the TrpF family.

It catalyses the reaction N-(5-phospho-beta-D-ribosyl)anthranilate = 1-(2-carboxyphenylamino)-1-deoxy-D-ribulose 5-phosphate. Its pathway is amino-acid biosynthesis; L-tryptophan biosynthesis; L-tryptophan from chorismate: step 3/5. The protein is N-(5'-phosphoribosyl)anthranilate isomerase of Trichormus variabilis (strain ATCC 29413 / PCC 7937) (Anabaena variabilis).